Consider the following 187-residue polypeptide: Elongation factor P (187 aa).

This sequence belongs to the elongation factor P family.

It is found in the cytoplasm. It participates in protein biosynthesis; polypeptide chain elongation. Involved in peptide bond synthesis. Stimulates efficient translation and peptide-bond synthesis on native or reconstituted 70S ribosomes in vitro. Probably functions indirectly by altering the affinity of the ribosome for aminoacyl-tRNA, thus increasing their reactivity as acceptors for peptidyl transferase. This Syntrophus aciditrophicus (strain SB) protein is Elongation factor P.